A 214-amino-acid polypeptide reads, in one-letter code: Peptide methionine sulfoxide reductase MsrA 2 (214 aa).

Cysteine 45 is a catalytic residue.

Belongs to the MsrA Met sulfoxide reductase family.

The enzyme catalyses L-methionyl-[protein] + [thioredoxin]-disulfide + H2O = L-methionyl-(S)-S-oxide-[protein] + [thioredoxin]-dithiol. The catalysed reaction is [thioredoxin]-disulfide + L-methionine + H2O = L-methionine (S)-S-oxide + [thioredoxin]-dithiol. In terms of biological role, has an important function as a repair enzyme for proteins that have been inactivated by oxidation. Catalyzes the reversible oxidation-reduction of methionine sulfoxide in proteins to methionine. The polypeptide is Peptide methionine sulfoxide reductase MsrA 2 (msrA2) (Synechocystis sp. (strain ATCC 27184 / PCC 6803 / Kazusa)).